The primary structure comprises 453 residues: Cysteine--tRNA ligase (453 aa).

Residue C30 coordinates Zn(2+). Residues 32–42 (PTVYDRAHLGN) carry the 'HIGH' region motif. Zn(2+) contacts are provided by C212, H237, and E241. A 'KMSKS' region motif is present at residues 268 to 272 (KMSKS). ATP is bound at residue K271.

This sequence belongs to the class-I aminoacyl-tRNA synthetase family. As to quaternary structure, monomer. The cofactor is Zn(2+).

It is found in the cytoplasm. The enzyme catalyses tRNA(Cys) + L-cysteine + ATP = L-cysteinyl-tRNA(Cys) + AMP + diphosphate. This Jannaschia sp. (strain CCS1) protein is Cysteine--tRNA ligase.